The chain runs to 109 residues: Beta-keratin-related protein (109 aa).

At serine 2 the chain carries N-acetylserine.

This sequence belongs to the avian keratin family.

The chain is Beta-keratin-related protein (BKJ) from Coturnix japonica (Japanese quail).